We begin with the raw amino-acid sequence, 265 residues long: Pro-opiomelanocortin (265 aa).

The signal sequence occupies residues 1 to 26; sequence MPRLCSSRSGALLLALLLQASMEVRG. 2 disulfide bridges follow: Cys28-Cys50 and Cys34-Cys46. An O-linked (GalNAc...) threonine glycan is attached at Thr71. Position 87 is a phenylalanine amide (Phe87). A disordered region spans residues 89-138; sequence RRNGSSSSGVGGAAQKREEEVAVGEGPGPRGDDAETGPREDKRSYSMEHF. The N-linked (GlcNAc...) asparagine glycan is linked to Asn91. The propeptide occupies 106–129; it reads EEEVAVGEGPGPRGDDAETGPRED. Positions 118-138 are enriched in basic and acidic residues; the sequence is RGDDAETGPREDKRSYSMEHF. Ser132 carries the post-translational modification N-acetylserine; in Corticotropin. Position 144 is a valine amide (Val144). Ser162 is subject to Phosphoserine. Glu173 bears the Pyrrolidone carboxylic acid (Glu); partial mark. A Sulfotyrosine modification is found at Tyr200. Residues 209-240 are disordered; that stretch reads EAAEKKDSGPYKMEHFRWGSPPKDKRYGGFMT. Over residues 210–235 the composition is skewed to basic and acidic residues; the sequence is AAEKKDSGPYKMEHFRWGSPPKDKRY.

The protein belongs to the POMC family. In terms of processing, specific enzymatic cleavages at paired basic residues yield the different active peptides. In terms of tissue distribution, ACTH and MSH are produced by the pituitary gland.

Its subcellular location is the secreted. Stimulates the adrenal glands to release cortisol. Functionally, anorexigenic peptide. Increases the pigmentation of skin by increasing melanin production in melanocytes. Its function is as follows. Endogenous orexigenic opiate. In terms of biological role, endogenous opiate. This chain is Pro-opiomelanocortin (POMC), found in Bos taurus (Bovine).